We begin with the raw amino-acid sequence, 888 residues long: Potassium channel AKT6 (888 aa).

The Cytoplasmic portion of the chain corresponds to 1–84 (MEKKKVWFWG…PFDPRYRAWE (84 aa)). Residues 10 to 31 (GVKDDGEGGGGRGGGRTKDAED) form a disordered region. Residues 85–105 (TFLVFLVLYTAWASPFEFGFL) form a helical membrane-spanning segment. At 106–113 (QKPRPPLS) the chain is on the extracellular side. A helical membrane pass occupies residues 114–134 (ILDNIVNGFFAVDIVLTFFVA). Over 135–155 (FLDKVTYLLVDDPKRIAWRYA) the chain is Cytoplasmic. Residues 156-176 (STWLIFDVVSTFPYEIFGSLL) traverse the membrane as a helical segment. Over 177 to 184 (HESIQGYG) the chain is Extracellular. Residues 185-205 (IFSMLRLWRLRRVSNCFARLE) form a helical; Voltage-sensor membrane-spanning segment. Residues 206–219 (KDRKYSYFWVRCSK) lie on the Cytoplasmic side of the membrane. A helical transmembrane segment spans residues 220–240 (LLLVTLFVIHCGACFLYSIAA). Topologically, residues 241 to 267 (HYPDPSKTFMALTDENWKESPIAVRYN) are extracellular. An intramembrane region (pore-forming) is located at residues 268 to 287 (TAMYWSITTFSTTGYGDIHG). At 288–291 (VNSR) the chain is on the extracellular side. Residues 292 to 312 (EMTFILFYMVFNLGLSAYIIG) form a helical membrane-spanning segment. Residues 313-888 (NMTNLVVHVT…GDFLLLSRDP (576 aa)) lie on the Cytoplasmic side of the membrane. Residue 398–519 (LFHGISNDLL…IMNNLLQHLK (122 aa)) participates in a nucleoside 3',5'-cyclic phosphate binding. 5 ANK repeats span residues 543–572 (DLPLSLCFAAARGDDLLLHQLLRRGSSPNE), 576–605 (DGRTALHIAASKGSHYCVVLLLEHGADPNI), 609–638 (EGNVPLWEAIIGRHREIAKLLAENGAKLSL), 640–669 (SVSYFSGLAVEKNCLDALKDIIKYGGDVTL), and 673–702 (NGTTALHRAVSEGHLEIVKFLLDQGADLDW). Positions 822–888 (RVTISSPENG…GDFLLLSRDP (67 aa)) constitute a KHA domain.

It belongs to the potassium channel family. Plant (TC 1.A.1.4) subfamily. As to quaternary structure, the potassium channel is probably composed of a homo- or heterotetrameric complex of pore-forming subunits. As to expression, predominantly expressed in flowers; especially in pollen.

The protein resides in the membrane. Its function is as follows. Highly selective inward-rectifying potassium channel that could mediate potassium uptake in the pollen membrane. Plays an important role in pollen tube development. Assuming opened or closed conformations in response to the voltage difference across the membrane, the channel is activated by hyperpolarization. May interact with the cytoskeleton or with regulatory proteins. In Arabidopsis thaliana (Mouse-ear cress), this protein is Potassium channel AKT6 (AKT6).